Reading from the N-terminus, the 601-residue chain is Terpenoid synthase 17 (601 aa).

Asn-354, Asp-358, Asn-497, Thr-501, and Glu-505 together coordinate Mg(2+). The DDXXD motif; degenerate signature appears at 354–358 (NDTCD).

Belongs to the terpene synthase family. Tpsa subfamily. Mg(2+) serves as cofactor. It depends on Mn(2+) as a cofactor. In terms of tissue distribution, expressed exclusively in flowers.

It localises to the cytoplasm. It functions in the pathway secondary metabolite biosynthesis; terpenoid biosynthesis. The chain is Terpenoid synthase 17 (TPS17) from Arabidopsis thaliana (Mouse-ear cress).